Here is a 323-residue protein sequence, read N- to C-terminus: MAACGEPGRPWQEEEAAAVVVVGSCMTDLVSLTSRLPKTGETIHGHEFFIGFGGKGANQCVQAARLGAKAAIVCKVGNDSFGNDYIENLKQNHISTEFTYQTRDAATGTASIIVNNEGQNIIVIVAGANLFLNSEDLKKAASVISRAKVMICQLEISPAASLEALTMARRSGVKTLFNPAPAMADLDPQFYTLSSIFCCNESEAEILTGHAVSDPTTAGKAAMILLERGCQVVVITLGASGCVILSQAEPVPKHIPTEAVKAVDTTGAGDSFVGALAFYLAYYPNLSLEEMLKRSNFIAAVSVQATGTQSSYPYKKDLPLALF.

Substrate-binding positions include 26 to 28, 54 to 58, and glutamate 155; these read MTD and GKGAN. Residues asparagine 200, 236–241, and threonine 257 each bind ATP; that span reads TLGASG. K(+) contacts are provided by aspartate 264 and threonine 266. ATP is bound by residues 269-270 and asparagine 296; that span reads GD. Residue aspartate 270 participates in substrate binding. Aspartate 270 serves as the catalytic Proton acceptor. Residues serine 302, alanine 305, glycine 307, and serine 311 each coordinate K(+).

Belongs to the carbohydrate kinase PfkB family. Ribokinase subfamily. As to quaternary structure, homodimer. Mg(2+) serves as cofactor.

Its subcellular location is the cytoplasm. The protein localises to the nucleus. It carries out the reaction D-ribose + ATP = D-ribose 5-phosphate + ADP + H(+). The protein operates within carbohydrate metabolism; D-ribose degradation; D-ribose 5-phosphate from beta-D-ribopyranose: step 2/2. Its activity is regulated as follows. Activated by a monovalent cation that binds near, but not in, the active site. The most likely occupant of the site in vivo is potassium. Ion binding induces a conformational change that may alter substrate affinity. Competitively inhibited by phosphonoacetic acid, etidronate, 2-carboxethylphosphonic acid, N-(phosphonomethyl)glycine, N-(phosphonomethyl)iminodiacetic acid and clodronate. Catalyzes the phosphorylation of ribose at O-5 in a reaction requiring ATP and magnesium. The resulting D-ribose-5-phosphate can then be used either for sythesis of nucleotides, histidine, and tryptophan, or as a component of the pentose phosphate pathway. This chain is Ribokinase, found in Mus musculus (Mouse).